Consider the following 162-residue polypeptide: Transcription elongation factor GreA (162 aa).

The stretch at 48 to 76 (NSEYQSAKDEQAFVEGRVKQLQQMIQFAQ) forms a coiled coil. Residues 111 to 132 (GSAESDPLSGKISNDSPMGKAL) form a disordered region.

It belongs to the GreA/GreB family.

Functionally, necessary for efficient RNA polymerase transcription elongation past template-encoded arresting sites. The arresting sites in DNA have the property of trapping a certain fraction of elongating RNA polymerases that pass through, resulting in locked ternary complexes. Cleavage of the nascent transcript by cleavage factors such as GreA or GreB allows the resumption of elongation from the new 3'terminus. GreA releases sequences of 2 to 3 nucleotides. The sequence is that of Transcription elongation factor GreA from Oenococcus oeni (strain ATCC BAA-331 / PSU-1).